We begin with the raw amino-acid sequence, 605 residues long: Elongation factor 4 (605 aa).

One can recognise a tr-type G domain in the interval 9 to 192 (CRIRNFCIIA…SIVHRIPPPA (184 aa)). GTP is bound by residues 21 to 26 (DHGKST) and 139 to 142 (NKID).

Belongs to the TRAFAC class translation factor GTPase superfamily. Classic translation factor GTPase family. LepA subfamily.

The protein localises to the cell inner membrane. It carries out the reaction GTP + H2O = GDP + phosphate + H(+). Functionally, required for accurate and efficient protein synthesis under certain stress conditions. May act as a fidelity factor of the translation reaction, by catalyzing a one-codon backward translocation of tRNAs on improperly translocated ribosomes. Back-translocation proceeds from a post-translocation (POST) complex to a pre-translocation (PRE) complex, thus giving elongation factor G a second chance to translocate the tRNAs correctly. Binds to ribosomes in a GTP-dependent manner. This is Elongation factor 4 from Chlorobium chlorochromatii (strain CaD3).